An 87-amino-acid polypeptide reads, in one-letter code: Cuticle protein 1 (87 aa).

Gln-1 carries the post-translational modification Pyrrolidone carboxylic acid. 3 repeat units span residues Tyr-5–Cys-20, Tyr-43–Cys-58, and Tyr-71–Cys-86. 3 cysteine pairs are disulfide-bonded: Cys-14–Cys-20, Cys-52–Cys-58, and Cys-80–Cys-86.

This chain is Cuticle protein 1, found in Blaberus craniifer (Death's head cockroach).